Reading from the N-terminus, the 593-residue chain is Arginine--tRNA ligase (593 aa).

The short motif at 138–148 (ANPTGPLHVGH) is the 'HIGH' region element.

It belongs to the class-I aminoacyl-tRNA synthetase family. In terms of assembly, monomer.

It localises to the cytoplasm. The catalysed reaction is tRNA(Arg) + L-arginine + ATP = L-arginyl-tRNA(Arg) + AMP + diphosphate. This Burkholderia lata (strain ATCC 17760 / DSM 23089 / LMG 22485 / NCIMB 9086 / R18194 / 383) protein is Arginine--tRNA ligase.